We begin with the raw amino-acid sequence, 286 residues long: Bifunctional protein FolD (286 aa).

Residues 163–165 (GMS), isoleucine 188, and isoleucine 229 contribute to the NADP(+) site.

The protein belongs to the tetrahydrofolate dehydrogenase/cyclohydrolase family. As to quaternary structure, homodimer.

The catalysed reaction is (6R)-5,10-methylene-5,6,7,8-tetrahydrofolate + NADP(+) = (6R)-5,10-methenyltetrahydrofolate + NADPH. The enzyme catalyses (6R)-5,10-methenyltetrahydrofolate + H2O = (6R)-10-formyltetrahydrofolate + H(+). It participates in one-carbon metabolism; tetrahydrofolate interconversion. In terms of biological role, catalyzes the oxidation of 5,10-methylenetetrahydrofolate to 5,10-methenyltetrahydrofolate and then the hydrolysis of 5,10-methenyltetrahydrofolate to 10-formyltetrahydrofolate. In Helicobacter hepaticus (strain ATCC 51449 / 3B1), this protein is Bifunctional protein FolD.